Consider the following 392-residue polypeptide: Protein DJ-1 homolog A (392 aa).

PfpI endopeptidase domains follow at residues 6-174 and 212-378; these read KTVL…EQLF and PQIL…EKFY.

The protein belongs to the peptidase C56 family. Homodimer. Interacts with CSD1 and GPX2.

The protein resides in the cytoplasm. It is found in the cytosol. It localises to the nucleus. In terms of biological role, involved in oxidative stress response. Confers protection against diverse stresses by binding both CSD1 and GPX2 and mediating the cytosolic activation of the Cu-Zn-dependent superoxide dismutase activity of CSD1. The sequence is that of Protein DJ-1 homolog A (DJ1A) from Arabidopsis thaliana (Mouse-ear cress).